The primary structure comprises 440 residues: Transposon Ty1-BR Gag polyprotein (440 aa).

Composition is skewed to polar residues over residues 1–10 (MESQQLSNYP), 48–60 (TKANSQQTTTPAS), and 127–152 (QSQFPQYPSSVGTPLSTPSPESGNTF). Disordered regions lie at residues 1–93 (MESQ…MMTQ), 126–173 (PQSQ…RPPP), and 352–440 (GSRN…PETY). The segment covering 153–165 (TDSSSADSDMTST) has biased composition (low complexity). The RNA-binding stretch occupies residues 299–401 (NNGIHINNKV…NSKSKTARAH (103 aa)). Positions 402-418 (NVSTSNNSPSTDNDSIS) are enriched in low complexity. Residue serine 416 is modified to Phosphoserine. Over residues 419-428 (KSTTEPIQLN) the composition is skewed to polar residues. Residues 429–440 (NKHDLHLRPETY) show a composition bias toward basic and acidic residues.

Homotrimer.

Its subcellular location is the cytoplasm. In terms of biological role, capsid protein (CA) is the structural component of the virus-like particle (VLP), forming the shell that encapsulates the retrotransposons dimeric RNA genome. The particles are assembled from trimer-clustered units and there are holes in the capsid shells that allow for the diffusion of macromolecules. CA also has nucleocapsid-like chaperone activity, promoting primer tRNA(i)-Met annealing to the multipartite primer-binding site (PBS), dimerization of Ty1 RNA and initiation of reverse transcription. The chain is Transposon Ty1-BR Gag polyprotein (TY1A-BR) from Saccharomyces cerevisiae (strain ATCC 204508 / S288c) (Baker's yeast).